The chain runs to 183 residues: Large ribosomal subunit protein uL5 (183 aa).

It belongs to the universal ribosomal protein uL5 family. As to quaternary structure, part of the 50S ribosomal subunit; part of the 5S rRNA/L5/L18/L25 subcomplex. Contacts the 5S rRNA and the P site tRNA. Forms a bridge to the 30S subunit in the 70S ribosome.

In terms of biological role, this is one of the proteins that bind and probably mediate the attachment of the 5S RNA into the large ribosomal subunit, where it forms part of the central protuberance. In the 70S ribosome it contacts protein S13 of the 30S subunit (bridge B1b), connecting the 2 subunits; this bridge is implicated in subunit movement. Contacts the P site tRNA; the 5S rRNA and some of its associated proteins might help stabilize positioning of ribosome-bound tRNAs. The protein is Large ribosomal subunit protein uL5 of Kosmotoga olearia (strain ATCC BAA-1733 / DSM 21960 / TBF 19.5.1).